We begin with the raw amino-acid sequence, 172 residues long: MKKVNVMIYMAFMITLEIVFTRFLSIQTPIIRIGFGFIPVAMSGMMFGPLLAGIVGATSDVLGMMIFPKGAYFPGFTLSAFVGAVIYGVFFYNKKVSVKRVLLAVGIITVLVNLTMNTIWLQILTGKAVKVLFVTRLVKEAIMFPIHAIVIYGAWKMVDRLEIMNKVAKFNK.

Helical transmembrane passes span 6–26, 35–55, 71–91, 101–121, and 131–151; these read VMIY…FLSI, FGFI…AGIV, AYFP…GVFF, VLLA…TIWL, and VLFV…AIVI.

As to quaternary structure, forms a stable energy-coupling factor (ECF) transporter complex composed of a membrane-embedded substrate-binding protein (S component), two ATP-binding proteins (A components) and a transmembrane protein (T component).

It localises to the cell membrane. Folate-binding protein that interacts with the energy-coupling factor (ECF) ABC-transporter complex. Unlike classic ABC transporters this ECF transporter provides the energy necessary to transport a number of different substrates. The substrates themselves are bound by transmembrane, not extracytoplasmic soluble proteins. The sequence is that of Folate transporter FolT (folT) from Clostridium novyi (strain NT).